Consider the following 58-residue polypeptide: uncharacterized protein (58 aa).

This is an uncharacterized protein from Methanocaldococcus jannaschii (strain ATCC 43067 / DSM 2661 / JAL-1 / JCM 10045 / NBRC 100440) (Methanococcus jannaschii).